The primary structure comprises 340 residues: MTQAVLKELAKAELHCHLDGSLSLPAIRKLANMADIILPSSDKELRKYVIAPAQTESLVDYLKTFEFIRPLLQTKEALRFAAYDVARQAALENVIYIEIRFAPELSMDKGLTASDTVLAVLEGLADAQKEFNIVARALVCGMRQSSHKTTKDIIKHIVDLAPKGLVGFDFAGDEFSYPTDSLVDLIQEVKRSGYPMTLHAGECGCAKHIADSLNLGIKRMGHVTALTGQRDLIKRFVEEDAVAEMCLTSNLQTKAASSIQSFPYQELYDAGGKITINTDNRTVSDTNLTKEYSLFVTYFGTKIEDFLVFNQNAVKASFTSDSEKDTLLHKLQENYDSYLK.

Positions 15 and 17 each coordinate Zn(2+). Substrate contacts are provided by histidine 17, aspartate 19, and glycine 172. Zn(2+) is bound at residue histidine 199. Catalysis depends on glutamate 202, which acts as the Proton donor. Aspartate 279 lines the Zn(2+) pocket.

This sequence belongs to the metallo-dependent hydrolases superfamily. Adenosine and AMP deaminases family. Adenosine deaminase subfamily. Zn(2+) serves as cofactor.

The catalysed reaction is adenosine + H2O + H(+) = inosine + NH4(+). The enzyme catalyses 2'-deoxyadenosine + H2O + H(+) = 2'-deoxyinosine + NH4(+). Its function is as follows. Catalyzes the hydrolytic deamination of adenosine and 2-deoxyadenosine. This chain is Adenosine deaminase, found in Streptococcus agalactiae serotype III (strain NEM316).